The chain runs to 385 residues: tRNA-specific 2-thiouridylase MnmA (385 aa).

ATP is bound by residues Ala18–Ser25 and Leu44. Catalysis depends on Cys112, which acts as the Nucleophile. Residues Cys112 and Cys209 are joined by a disulfide bond. An ATP-binding site is contributed by Gly136. The segment at Arg159–Gln161 is interaction with tRNA. Cys209 acts as the Cysteine persulfide intermediate in catalysis.

The protein belongs to the MnmA/TRMU family.

Its subcellular location is the cytoplasm. It catalyses the reaction S-sulfanyl-L-cysteinyl-[protein] + uridine(34) in tRNA + AH2 + ATP = 2-thiouridine(34) in tRNA + L-cysteinyl-[protein] + A + AMP + diphosphate + H(+). Its function is as follows. Catalyzes the 2-thiolation of uridine at the wobble position (U34) of tRNA, leading to the formation of s(2)U34. In Methylorubrum populi (strain ATCC BAA-705 / NCIMB 13946 / BJ001) (Methylobacterium populi), this protein is tRNA-specific 2-thiouridylase MnmA.